The primary structure comprises 603 residues: Keratin, type II cuticular Hb4 (603 aa).

Residues 1 to 173 form a head region; the sequence is MSCRSYRVSS…PNAQRVKRDE (173 aa). The IF rod domain maps to 173-484; sequence EKEQIKTLNN…RLLEGEEIRI (312 aa). The tract at residues 174–208 is coil 1A; sequence KEQIKTLNNKFASFIDKVRFLEQQNKLLETKWSFL. Residues 209–218 form a linker 1 region; that stretch reads QEQKCARSNL. The coil 1B stretch occupies residues 219–319; the sequence is EPLFDNYITN…YHEEIEMLQS (101 aa). Residues 320–336 form a linker 12 region; the sequence is HISETSVIVKMDNSRDL. The tract at residues 337–480 is coil 2; sequence NLDGIIAEVK…VTYRRLLEGE (144 aa). The segment at 481–603 is tail; it reads EIRICEGVGP…STTTSRRTRY (123 aa). The tract at residues 579–603 is disordered; it reads CSGGRGNRSSSVRFSSTTTSRRTRY.

It belongs to the intermediate filament family. In terms of assembly, heterotetramer of two type I and two type II keratins. In terms of tissue distribution, in skin, only expressed in the suprabasal cells of tail scale epidermis. Suprabasally expressed in stratified squamous epithelia and also in the posterior unit of the complex filiform papillae of tongue. Expressed in rare anatomical sites in which an orthokeratinized stratum corneum would be too soft and a hard keratinized structure would be too rigid to meet the functional requirement of the respective epithelia.

This Mus musculus (Mouse) protein is Keratin, type II cuticular Hb4 (Krt84).